Here is a 34-residue protein sequence, read N- to C-terminus: Photosystem II reaction center protein M (34 aa).

A helical transmembrane segment spans residues Gly-7–Ile-27.

It belongs to the PsbM family. As to quaternary structure, PSII is composed of 1 copy each of membrane proteins PsbA, PsbB, PsbC, PsbD, PsbE, PsbF, PsbH, PsbI, PsbJ, PsbK, PsbL, PsbM, PsbT, PsbX, PsbY, PsbZ, Psb30/Ycf12, peripheral proteins PsbO, CyanoQ (PsbQ), PsbU, PsbV and a large number of cofactors. It forms dimeric complexes.

The protein localises to the cellular thylakoid membrane. In terms of biological role, one of the components of the core complex of photosystem II (PSII). PSII is a light-driven water:plastoquinone oxidoreductase that uses light energy to abstract electrons from H(2)O, generating O(2) and a proton gradient subsequently used for ATP formation. It consists of a core antenna complex that captures photons, and an electron transfer chain that converts photonic excitation into a charge separation. This subunit is found at the monomer-monomer interface. In Picosynechococcus sp. (strain ATCC 27264 / PCC 7002 / PR-6) (Agmenellum quadruplicatum), this protein is Photosystem II reaction center protein M.